A 155-amino-acid polypeptide reads, in one-letter code: SsrA-binding protein (155 aa).

Belongs to the SmpB family.

It is found in the cytoplasm. Required for rescue of stalled ribosomes mediated by trans-translation. Binds to transfer-messenger RNA (tmRNA), required for stable association of tmRNA with ribosomes. tmRNA and SmpB together mimic tRNA shape, replacing the anticodon stem-loop with SmpB. tmRNA is encoded by the ssrA gene; the 2 termini fold to resemble tRNA(Ala) and it encodes a 'tag peptide', a short internal open reading frame. During trans-translation Ala-aminoacylated tmRNA acts like a tRNA, entering the A-site of stalled ribosomes, displacing the stalled mRNA. The ribosome then switches to translate the ORF on the tmRNA; the nascent peptide is terminated with the 'tag peptide' encoded by the tmRNA and targeted for degradation. The ribosome is freed to recommence translation, which seems to be the essential function of trans-translation. The chain is SsrA-binding protein from Bacillus cereus (strain ATCC 10987 / NRS 248).